The chain runs to 515 residues: Bifunctional purine biosynthesis protein PurH (515 aa).

Residues 1-144 (MGRKALISVS…KNHKFVTIIV (144 aa)) form the MGS-like domain.

Belongs to the PurH family.

It catalyses the reaction (6R)-10-formyltetrahydrofolate + 5-amino-1-(5-phospho-beta-D-ribosyl)imidazole-4-carboxamide = 5-formamido-1-(5-phospho-D-ribosyl)imidazole-4-carboxamide + (6S)-5,6,7,8-tetrahydrofolate. The enzyme catalyses IMP + H2O = 5-formamido-1-(5-phospho-D-ribosyl)imidazole-4-carboxamide. It participates in purine metabolism; IMP biosynthesis via de novo pathway; 5-formamido-1-(5-phospho-D-ribosyl)imidazole-4-carboxamide from 5-amino-1-(5-phospho-D-ribosyl)imidazole-4-carboxamide (10-formyl THF route): step 1/1. Its pathway is purine metabolism; IMP biosynthesis via de novo pathway; IMP from 5-formamido-1-(5-phospho-D-ribosyl)imidazole-4-carboxamide: step 1/1. This Persephonella marina (strain DSM 14350 / EX-H1) protein is Bifunctional purine biosynthesis protein PurH.